Reading from the N-terminus, the 476-residue chain is Eukaryotic translation initiation factor 3 subunit L (476 aa).

The 196-residue stretch at 257 to 452 (DAIRMFSHIL…DLDYALEKDL (196 aa)) folds into the PCI domain.

This sequence belongs to the eIF-3 subunit L family. As to quaternary structure, component of the eukaryotic translation initiation factor 3 (eIF-3) complex.

It is found in the cytoplasm. Its function is as follows. Component of the eukaryotic translation initiation factor 3 (eIF-3) complex, which is involved in protein synthesis of a specialized repertoire of mRNAs and, together with other initiation factors, stimulates binding of mRNA and methionyl-tRNAi to the 40S ribosome. The eIF-3 complex specifically targets and initiates translation of a subset of mRNAs involved in cell proliferation. The chain is Eukaryotic translation initiation factor 3 subunit L from Emericella nidulans (strain FGSC A4 / ATCC 38163 / CBS 112.46 / NRRL 194 / M139) (Aspergillus nidulans).